Reading from the N-terminus, the 144-residue chain is HTH-type transcriptional regulator BilQ (144 aa).

The HTH marR-type domain occupies 1–134 (MEQTFAYYTT…LFTLLQKLGK (134 aa)). A DNA-binding region (H-T-H motif) is located at residues 48–71 (QRELAAAVRADEGYAARSVEKLLQ).

Its function is as follows. Transcription regulator that regulates expression of the bilirubin reductase operon (bilQ, bilR and bilS). The chain is HTH-type transcriptional regulator BilQ from Clostridium symbiosum (strain WAL-14163).